A 699-amino-acid chain; its full sequence is Osmotic avoidance abnormal protein 3 (699 aa).

Positions 4–327 (SVRVAVRCRP…LRYANRAKNI (324 aa)) constitute a Kinesin motor domain. 87 to 94 (GQTGSGKT) serves as a coordination point for ATP. Residues 339–523 (DALLREYQEE…EIEDLHGEFE (185 aa)) are a coiled coil.

Belongs to the TRAFAC class myosin-kinesin ATPase superfamily. Kinesin family. Kinesin II subfamily. In terms of tissue distribution, expressed in an exclusive set of 26 chemosensory neurons whose dendritic endings are exposed to the external environment; six IL2 neurons of the inner labial sensilla, 8 pairs of amphid neurons in the head, and 2 pairs of phasmid neurons in the tail.

The protein localises to the cytoplasm. Its subcellular location is the cytoskeleton. The protein resides in the cell projection. It localises to the cilium. It is found in the cilium axoneme. The protein localises to the cilium basal body. Its function is as follows. Kinesin motor protein which is required for the anterograde intraflagellar transport (IFT) along the middle segment of the sensory neuron cilia together with the kinesin II motor complex (composed of klp-11, klp-20 and kap-1) and on its own, is required for IFT along the distal segment. In addition, regulates the length of cilia. May have a role during neurogenesis and axonal transport. This Caenorhabditis elegans protein is Osmotic avoidance abnormal protein 3.